The following is a 356-amino-acid chain: 16-methoxy-2,3-dihydro-3-hydroxytabersonine synthase (356 aa).

Residues Cys49, His71, Cys102, Cys105, Cys108, Cys116, and Cys162 each contribute to the Zn(2+) site. Residue Gly187–Gly192 coordinates NAD(+).

This sequence belongs to the zinc-containing alcohol dehydrogenase family. It depends on Zn(2+) as a cofactor. As to expression, expressed in leaf epidermis.

The enzyme catalyses (3R)-3-hydroxy-16-methoxy-2,3-dihydrotabersonine + A = (3R)-1,2-didehydro-3-hydroxy-16-methoxy-2,3-dihydrotabersonine + AH2. It catalyses the reaction (3R)-3-hydroxy-2,3-dihydrotabersonine + A = (3R)-1,2-didehydro-3-hydroxy-2,3-dihydrotabersonine + AH2. The protein operates within alkaloid biosynthesis; vindoline biosynthesis. Converts the unstable imine alcohols produced by CYP71D1V2/T3O into 3-hydroxy-16-methoxy-2,3-dihydrotabersonine or 3-hydroxy-2,3-dihydrotabersonine. This is 16-methoxy-2,3-dihydro-3-hydroxytabersonine synthase from Catharanthus roseus (Madagascar periwinkle).